A 179-amino-acid polypeptide reads, in one-letter code: ADP-ribosylation factor-like protein 5A (179 aa).

Residue glycine 2 is the site of N-myristoyl glycine attachment. Residues 23 to 30, 66 to 70, 125 to 128, and alanine 159 contribute to the GTP site; these read GLDNAGKT, DIGGQ, and NKQD.

This sequence belongs to the small GTPase superfamily. Arf family. Low amounts were found in most tissues examined with highest levels in brain, intestine and thymus.

Its function is as follows. Lacks ADP-ribosylation enhancing activity. This is ADP-ribosylation factor-like protein 5A (Arl5a) from Rattus norvegicus (Rat).